The chain runs to 623 residues: Cilia- and flagella-associated protein 52 (623 aa).

WD repeat units follow at residues 65–109, 112–153, 159–198, 291–330, 333–372, 375–414, 418–457, 462–501, 503–544, 546–585, and 588–623; these read GHGN…LMAR, LHKG…AICG, LNVGNATTVIFSKCRDEMFVTAGNGTIRVWELDLPNRKIW, QLQGGITSITLRGEGHQFFVGTEESHIYRVNFTNFKETLI, CHFESVEDIVFPFGTAELFATCAKKDIRVWHTLTNRELLR, VPNMTCHGIDFMRDGKSIISAWDDGRIRAFAPETGRLMYV, AHRIGVTAIATTSDCKRVISGGGEGEVRVWHIGHQTQKLE, EHKSSVSCIRVKKSNEECVTASTDGTCIIWDLVRLRRNQM, LANT…RELD, SLSGAVNGMDITVEGVHFVTGGNDHLVKVWDYNEGEVTHV, and GHSGNITRIRISPGNQYIVSVSADGAILRWKYPFPS.

It belongs to the CFAP52 family. As to quaternary structure, microtubule inner protein component of sperm flagellar doublet microtubules. Interacts with BRCA2. Interacts with the CCT chaperonin complex. Interacts with HSP70. Interacts with AK8. Interacts with CFAP45. Interacts with DNAI1. Interacts with IQDC. Expressed in trachea multiciliated cells.

Its subcellular location is the cytoplasm. It is found in the cytoskeleton. The protein resides in the cilium axoneme. It localises to the flagellum axoneme. Its function is as follows. Microtubule inner protein (MIP) part of the dynein-decorated doublet microtubules (DMTs) in cilia axoneme. Important for proper ciliary and flagellar beating. May act in cooperation with CFAP45 and axonemal dynein subunit DNAH11. May play a role in cell growth and/or survival. The protein is Cilia- and flagella-associated protein 52 (CFAP52) of Bos taurus (Bovine).